The primary structure comprises 419 residues: Ribosomal RNA large subunit methyltransferase G (419 aa).

Positions 386-408 are enriched in basic and acidic residues; that stretch reads KAEPFETHPTEAEAKVEVTESKP. Residues 386 to 419 are disordered; that stretch reads KAEPFETHPTEAEAKVEVTESKPHPQSSLYGTKK. The span at 409 to 419 shows a compositional bias: polar residues; sequence HPQSSLYGTKK.

The protein belongs to the methyltransferase superfamily. RlmG family.

It is found in the cytoplasm. It carries out the reaction guanosine(1835) in 23S rRNA + S-adenosyl-L-methionine = N(2)-methylguanosine(1835) in 23S rRNA + S-adenosyl-L-homocysteine + H(+). In terms of biological role, specifically methylates the guanine in position 1835 (m2G1835) of 23S rRNA. The protein is Ribosomal RNA large subunit methyltransferase G of Shewanella woodyi (strain ATCC 51908 / MS32).